The sequence spans 467 residues: Microtubule-associated tyrosine carboxypeptidase 1 (467 aa).

Residues 1 to 10 (MVLDSGTQVY) show a composition bias toward polar residues. 2 disordered regions span residues 1-40 (MVLD…PLYP) and 77-111 (MRRS…TLRP). Histidine 276 lines the Zn(2+) pocket. Glutamate 277 (nucleophile) is an active-site residue. Zn(2+) is bound by residues histidine 281 and glutamate 312.

It belongs to the peptidase MATCAP family. It depends on Zn(2+) as a cofactor.

Its subcellular location is the cytoplasm. It localises to the cytoskeleton. The catalysed reaction is C-terminal L-alpha-aminoacyl-L-glutamyl-L-glutamyl-L-tyrosyl-[tubulin] + H2O = C-terminal L-alpha-aminoacyl-L-glutamyl-L-glutamyl-[tubulin] + L-tyrosine. It catalyses the reaction C-terminal L-alpha-aminoacyl-L-glutamyl-L-glutamyl-L-phenylalanyl-[tubulin] + H2O = C-terminal L-alpha-aminoacyl-L-glutamyl-L-glutamyl-[tubulin] + L-phenylalanine. Tyrosine carboxypeptidase that removes the C-terminal tyrosine residue of alpha-tubulin, thereby regulating microtubule dynamics and function. Also able to remove the C-terminal phenylalanine residue of alpha-tubulin TUBA8. Recognizes adjacent tubulin dimers along the same protofilament. The sequence is that of Microtubule-associated tyrosine carboxypeptidase 1 from Mus musculus (Mouse).